The primary structure comprises 450 residues: Gastrin/cholecystokinin type B receptor (450 aa).

Residues 1 to 57 (MELLKLNSSVQGPGPGSGSSLCHPGVSLLNSSSAGNLSCEPPRIRGTGTRELELAIR) are Extracellular-facing. Asparagine 7, asparagine 30, and asparagine 36 each carry an N-linked (GlcNAc...) asparagine glycan. Residues 58-79 (ITLYAVIFLMSIGGNMLIIVVL) form a helical membrane-spanning segment. The Cytoplasmic portion of the chain corresponds to 80–87 (GLSRRLRT). Residues 88–109 (VTNAFLLSLAVSDLLLAVACMP) form a helical membrane-spanning segment. At 110–131 (FTLLPNLMGTFIFGTVICKAVS) the chain is on the extracellular side. A disulfide bond links cysteine 127 and cysteine 205. The helical transmembrane segment at 132–150 (YLMGVSVSVSTLNLVAIAL) threads the bilayer. Over 151–170 (ERYSAICRPLQARVWQTRSH) the chain is Cytoplasmic. A helical transmembrane segment spans residues 171–189 (AARVILATWLLSGLLMVPY). The Extracellular portion of the chain corresponds to 190-219 (PVYTVVQPVGPRVLQCMHRWPSARVRQTWS). The chain crosses the membrane as a helical span at residues 220-242 (VLLLMLLFFIPGVVMAVAYGLIS). At 243-336 (RELYLGLRFD…KLLAKKRVVR (94 aa)) the chain is on the cytoplasmic side. Positions 258–277 (DTQSRVRNQGGLPGGTAPGP) are disordered. The helical transmembrane segment at 337–358 (MLLVIVLLFFLCWLPIYSANTW) threads the bilayer. The Extracellular portion of the chain corresponds to 359 to 376 (CAFDGPGAHRALSGAPIS). A helical membrane pass occupies residues 377–397 (FIHLLSYASACVNPLVYCFMH). The Cytoplasmic portion of the chain corresponds to 398–450 (RRFRQACLDTCARCCPRPPRARPRPLPDEDPPTPSIASLSRLSYTTISTLGPG). Cysteine 411 carries the S-palmitoyl cysteine lipid modification.

This sequence belongs to the G-protein coupled receptor 1 family. Stomach and brain.

It is found in the cell membrane. In terms of biological role, receptor for gastrin and cholecystokinin. The CCK-B receptors occur throughout the central nervous system where they modulate anxiety, analgesia, arousal, and neuroleptic activity. This receptor mediates its action by association with G proteins that activate a phosphatidylinositol-calcium second messenger system. The chain is Gastrin/cholecystokinin type B receptor (CCKBR) from Mastomys natalensis (African soft-furred rat).